The sequence spans 109 residues: Class I hydrophobin 18 (109 aa).

Positions 1–20 are cleaved as a signal peptide; the sequence is MFTEQVLNVIILLQTATVTA. 4 disulfide bridges follow: C28-C88, C35-C82, C36-C69, and C89-C102. N91 and N106 each carry an N-linked (GlcNAc...) asparagine glycan.

The protein belongs to the fungal hydrophobin family. In terms of assembly, self-assembles to form functional amyloid fibrils called rodlets. Self-assembly into fibrillar rodlets occurs spontaneously at hydrophobic:hydrophilic interfaces and the rodlets further associate laterally to form amphipathic monolayers.

The protein resides in the secreted. Its subcellular location is the cell wall. Functionally, aerial growth, conidiation, and dispersal of filamentous fungi in the environment rely upon a capability of their secreting small amphipathic proteins called hydrophobins (HPBs) with low sequence identity. Class I can self-assemble into an outermost layer of rodlet bundles on aerial cell surfaces, conferring cellular hydrophobicity that supports fungal growth, development and dispersal; whereas Class II form highly ordered films at water-air interfaces through intermolecular interactions but contribute nothing to the rodlet structure. In Pleurotus ostreatus (strain PC15) (Oyster mushroom), this protein is Class I hydrophobin 18.